Consider the following 395-residue polypeptide: MAPSPLAWLLRLAAFFHLCTLLPGQHLGMTKCEIMCDKMTSRIPVALLIRYQLNQESCGKRAIVLETTQHRRFCADPKEKWVQDAMKHLDHQAAALTKNGGKFEKRVDNVTPGITLATRGLSPSALTKPESATLEDLALELTTISQEARGTMGTSQEPPAAVTGSSLSTSEAQDAGLTAKPQSIGSFEAADISTTVWPSPAVYQSGSSSWAEEKATESPSTTAPSPQVSTTSPSTPEENVGSEGQPPWVQGQDLSPEKSLGSEEINPVHTDNFQERGPGNTVHPSVAPISSEETPSPELVASGSQAPKIEEPIHATADPQKLSVLITPVPDTQAATRRQAVGLLAFLGLLFCLGVAMFAYQSLQGCPRKMAGEMVEGLRYVPRSCGSNSYVLVPV.

The first 24 residues, 1-24, serve as a signal peptide directing secretion; the sequence is MAPSPLAWLLRLAAFFHLCTLLPG. The segment at 25 to 100 is chemokine and involved in interaction with ITGAV:ITGB3 and ITGA4:ITGB1; sequence QHLGMTKCEI…HQAAALTKNG (76 aa). Residues 25-336 lie on the Extracellular side of the membrane; sequence QHLGMTKCEI…TPVPDTQAAT (312 aa). Disulfide bonds link cysteine 32–cysteine 58 and cysteine 36–cysteine 74. Positions 101 to 336 are mucin-like stalk; that stretch reads GKFEKRVDNV…TPVPDTQAAT (236 aa). Polar residues-rich tracts occupy residues 148–172 and 201–210; these read ARGT…TSEA and AVYQSGSSSW. 2 disordered regions span residues 148-180 and 201-305; these read ARGT…LTAK and AVYQ…SGSQ. Positions 218–236 are enriched in low complexity; sequence SPSTTAPSPQVSTTSPSTP. Residues 337–357 form a helical membrane-spanning segment; sequence RRQAVGLLAFLGLLFCLGVAM. Topologically, residues 358–395 are cytoplasmic; it reads FAYQSLQGCPRKMAGEMVEGLRYVPRSCGSNSYVLVPV.

This sequence belongs to the intercrine delta family. In terms of assembly, monomer. Forms a ternary complex with CX3CR1 and ITGAV:ITGB3 or ITGA4:ITGB1. A soluble short 80 kDa form may be released by proteolytic cleavage from the long membrane-anchored form. As to expression, highest levels in brain. Lower levels in kidney, heart and lung. Also found in skeletal muscle and testis. Highly expressed in lesional smooth muscle cells, but not macrophages. Low levels of ABCD-3 mRNA were also found in anti-CD40-stimulated splenic B-cells, but not in resting B-cells. Also expressed in dendritic cells.

It is found in the cell membrane. The protein resides in the secreted. Its function is as follows. Chemokine that acts as a ligand for both CX3CR1 and integrins ITGAV:ITGB3 and ITGA4:ITGB1. The CX3CR1-CX3CL1 signaling exerts distinct functions in different tissue compartments, such as immune response, inflammation, cell adhesion and chemotaxis. Regulates leukocyte adhesion and migration processes at the endothelium. Can activate integrins in both a CX3CR1-dependent and CX3CR1-independent manner. In the presence of CX3CR1, activates integrins by binding to the classical ligand-binding site (site 1) in integrins. In the absence of CX3CR1, binds to a second site (site 2) in integrins which is distinct from site 1 and enhances the binding of other integrin ligands to site 1. In terms of biological role, the soluble form is chemotactic for T-cells and monocytes, but not for neutrophils. Functionally, the membrane-bound form promotes adhesion of those leukocytes to endothelial cells. The polypeptide is Fractalkine (Mus musculus (Mouse)).